The following is a 323-amino-acid chain: Cyclin-H (323 aa).

S5 is subject to Phosphoserine; by CDK8. Residue S132 is modified to Phosphoserine. The interval 296 to 323 is disordered; the sequence is GYEDDDYVSKKPKQEEEEWTDDDLVDAL. Position 304 is a phosphoserine; by CDK8 (S304). The span at 310–323 shows a compositional bias: acidic residues; sequence EEEEWTDDDLVDAL. T315 bears the Phosphothreonine mark.

Belongs to the cyclin family. Cyclin C subfamily. As to quaternary structure, associates primarily with CDK7 and MAT1 to form the CAK complex. CAK can further associate with the core-TFIIH to form the TFIIH basal transcription factor.

Its subcellular location is the nucleus. Functionally, regulates CDK7, the catalytic subunit of the CDK-activating kinase (CAK) enzymatic complex. CAK activates the cyclin-associated kinases CDK1, CDK2, CDK4 and CDK6 by threonine phosphorylation. CAK complexed to the core-TFIIH basal transcription factor activates RNA polymerase II by serine phosphorylation of the repetitive C-terminal domain (CTD) of its large subunit (POLR2A), allowing its escape from the promoter and elongation of the transcripts. Involved in cell cycle control and in RNA transcription by RNA polymerase II. Its expression and activity are constant throughout the cell cycle. The chain is Cyclin-H (Ccnh) from Rattus norvegicus (Rat).